Reading from the N-terminus, the 103-residue chain is MPLRRRASHMFVLLCALSLCVESVKGGTSFLSPAQKPQGRRPPRMGRRDVAEPEIPVIKEDDQFMMSAPFELSVSLSEAEYEKYGPVLQKVLVNLLGDSPLEF.

An N-terminal signal peptide occupies residues 1–26 (MPLRRRASHMFVLLCALSLCVESVKG). A disordered region spans residues 27–51 (GTSFLSPAQKPQGRRPPRMGRRDVA). The O-decanoyl serine; alternate moiety is linked to residue Ser-29. Ser-29 carries the O-hexanoyl serine; alternate lipid modification. Residue Ser-29 is the site of O-octanoyl serine; alternate attachment. Gln-38 bears the Glutamine amide mark. Met-45 is modified (methionine amide). The propeptide at 49 to 103 (DVAEPEIPVIKEDDQFMMSAPFELSVSLSEAEYEKYGPVLQKVLVNLLGDSPLEF) is removed in mature form.

This sequence belongs to the motilin family. O-octanoylated by GOAT/MBOAT4. O-octanoylation or O-decanoylation is essential for activity. The O-decanoylated form differs in the length of the carbon backbone of the carboxylic acid forming an ester bond with Ser-29. Expressed in the telencephalon, hypothalamus, pituitary, intestine, liver, spleen and gill, with expression strongest in the intestine.

The protein resides in the secreted. Ligand for growth hormone secretagogue receptor type 1 (GHSR). Induces the release of growth hormone from the pituitary. Induces adiposity and stimulates gastric acid secretion. Involved in growth regulation. Has an appetite-stimulating effect. The sequence is that of Ghrelin (ghrl) from Carassius auratus (Goldfish).